The following is a 198-amino-acid chain: Recombination protein RecR (198 aa).

The C4-type zinc-finger motif lies at 57-72 (CSICGNLTDDDPCHIC). A Toprim domain is found at 80–175 (TTILVVEDAK…KVTRLARGLA (96 aa)).

It belongs to the RecR family.

May play a role in DNA repair. It seems to be involved in an RecBC-independent recombinational process of DNA repair. It may act with RecF and RecO. The polypeptide is Recombination protein RecR (Streptococcus pyogenes serotype M5 (strain Manfredo)).